The primary structure comprises 75 residues: UPF0352 protein VP2129 (75 aa).

Belongs to the UPF0352 family.

The polypeptide is UPF0352 protein VP2129 (Vibrio parahaemolyticus serotype O3:K6 (strain RIMD 2210633)).